We begin with the raw amino-acid sequence, 253 residues long: Cholesterol ring-cleaving hydrolase IpdB subunit (253 aa).

This sequence belongs to the 3-oxoacid CoA-transferase subunit B family. As to quaternary structure, heterotetramer composed of 2 IpdA subunits and 2 IpdB subunits.

It catalyses the reaction (3E)-2-(2-carboxylatoethyl)-3-methyl-6-oxocyclohex-1-ene-1-carboxyl-CoA + H2O = 6-methyl-3,7-dioxodecanedioyl-CoA. Its pathway is steroid metabolism; cholesterol degradation. Its function is as follows. Involved in the final steps of cholesterol and steroid degradation. Opens the last steroid ring of cholesterol by catalyzing the hydrolysis of (3E)-2-(2-carboxylatoethyl)-3-methyl-6-oxocyclohex-1-ene-1-carboxyl-CoA (COCHEA-CoA) to 6-methyl-3,7-dioxodecanedioyl-CoA (MeDODA-CoA). The protein is Cholesterol ring-cleaving hydrolase IpdB subunit of Rhodococcus jostii (strain RHA1).